Reading from the N-terminus, the 315-residue chain is 4-hydroxy-3-methylbut-2-enyl diphosphate reductase (315 aa).

Residue C12 coordinates [4Fe-4S] cluster. (2E)-4-hydroxy-3-methylbut-2-enyl diphosphate-binding residues include H41 and H74. Dimethylallyl diphosphate-binding residues include H41 and H74. Residues H41 and H74 each coordinate isopentenyl diphosphate. Residue C96 coordinates [4Fe-4S] cluster. H124 contacts (2E)-4-hydroxy-3-methylbut-2-enyl diphosphate. H124 contacts dimethylallyl diphosphate. An isopentenyl diphosphate-binding site is contributed by H124. The active-site Proton donor is the E126. Position 168 (T168) interacts with (2E)-4-hydroxy-3-methylbut-2-enyl diphosphate. C198 is a binding site for [4Fe-4S] cluster. (2E)-4-hydroxy-3-methylbut-2-enyl diphosphate-binding residues include S226, S227, N228, and S270. The dimethylallyl diphosphate site is built by S226, S227, N228, and S270. Isopentenyl diphosphate contacts are provided by S226, S227, N228, and S270.

This sequence belongs to the IspH family. It depends on [4Fe-4S] cluster as a cofactor.

It catalyses the reaction isopentenyl diphosphate + 2 oxidized [2Fe-2S]-[ferredoxin] + H2O = (2E)-4-hydroxy-3-methylbut-2-enyl diphosphate + 2 reduced [2Fe-2S]-[ferredoxin] + 2 H(+). It carries out the reaction dimethylallyl diphosphate + 2 oxidized [2Fe-2S]-[ferredoxin] + H2O = (2E)-4-hydroxy-3-methylbut-2-enyl diphosphate + 2 reduced [2Fe-2S]-[ferredoxin] + 2 H(+). It functions in the pathway isoprenoid biosynthesis; dimethylallyl diphosphate biosynthesis; dimethylallyl diphosphate from (2E)-4-hydroxy-3-methylbutenyl diphosphate: step 1/1. Its pathway is isoprenoid biosynthesis; isopentenyl diphosphate biosynthesis via DXP pathway; isopentenyl diphosphate from 1-deoxy-D-xylulose 5-phosphate: step 6/6. Catalyzes the conversion of 1-hydroxy-2-methyl-2-(E)-butenyl 4-diphosphate (HMBPP) into a mixture of isopentenyl diphosphate (IPP) and dimethylallyl diphosphate (DMAPP). Acts in the terminal step of the DOXP/MEP pathway for isoprenoid precursor biosynthesis. This chain is 4-hydroxy-3-methylbut-2-enyl diphosphate reductase, found in Pseudomonas savastanoi pv. phaseolicola (strain 1448A / Race 6) (Pseudomonas syringae pv. phaseolicola (strain 1448A / Race 6)).